The primary structure comprises 463 residues: A-type ATP synthase subunit B (463 aa).

The protein belongs to the ATPase alpha/beta chains family. Has multiple subunits with at least A(3), B(3), C, D, E, F, H, I and proteolipid K(x).

It is found in the cell membrane. Component of the A-type ATP synthase that produces ATP from ADP in the presence of a proton gradient across the membrane. The B chain is a regulatory subunit. This Methanothrix thermoacetophila (strain DSM 6194 / JCM 14653 / NBRC 101360 / PT) (Methanosaeta thermophila) protein is A-type ATP synthase subunit B.